A 43-amino-acid chain; its full sequence is Protein PsbN (43 aa).

The chain crosses the membrane as a helical span at residues Thr-5–Phe-27.

Belongs to the PsbN family.

It localises to the plastid. It is found in the chloroplast thylakoid membrane. Its function is as follows. May play a role in photosystem I and II biogenesis. The sequence is that of Protein PsbN from Cedrus deodara (Deodar cedar).